Here is a 332-residue protein sequence, read N- to C-terminus: Fructose-1,6-bisphosphatase class 1 (332 aa).

Mg(2+)-binding residues include E89, D110, L112, and D113. Substrate contacts are provided by residues 113–116 (DGSS), N206, Y239, 257–259 (YLY), and K269. E275 is a Mg(2+) binding site.

The protein belongs to the FBPase class 1 family. Homotetramer. Requires Mg(2+) as cofactor.

The protein resides in the cytoplasm. The enzyme catalyses beta-D-fructose 1,6-bisphosphate + H2O = beta-D-fructose 6-phosphate + phosphate. The protein operates within carbohydrate biosynthesis; gluconeogenesis. This Escherichia coli O157:H7 protein is Fructose-1,6-bisphosphatase class 1.